The primary structure comprises 126 residues: Ejaculatory bulb-specific protein 3 (126 aa).

Residues methionine 1–alanine 17 form the signal peptide.

Belongs to the insect A10/OS-D protein family. As to expression, specifically expressed in the ejaculatory bulb and seminal fluid.

The protein localises to the secreted. Its function is as follows. Protein component of the posterior mating plug. The protein is Ejaculatory bulb-specific protein 3 of Drosophila melanogaster (Fruit fly).